Here is a 484-residue protein sequence, read N- to C-terminus: MSQSDSQPFDLLLAGGTLIDGSNTPGRRADLGVRGDRIAAIGDLSDAAAHTRVDVSGLVVAPGFIDSHTHDDNYLLRRRDMTPKISQGVTTVVTGNCGISLAPLAHANPPAPLDLLDEGGSYRFERFADYLDALRATPAAVNAACMVGHSTLRAAVMPDLQRAATDEEIAAMRDLAEEAMASGAIGISTGAFYPPAARATTEEIIEVCRPLSAHGGIYATHMRDEGEHIVAALEETFRIGRELDVPVVISHHKVMGQPNFGRSRETLPLIEAAMARQDVSLDAYPYVAGSTMLKQDRVLLAGRTIITWCKPFPELSGRDLDEVAAERGKSKYDVVPELQPAGAIYFMMDEPDVQRILAFGPTMIGSDGLPHDERPHPRLWGTFPRVLGHYARDLGLFPLETAVWKMTGLTAARFGLAGRGQLQAGYFADLVVFDPATVADTATFEHPTERAAGIHSVYVNGAPVWQEQAFTGQHAGRVLARTAA.

This sequence belongs to the metallo-dependent hydrolases superfamily. N-acyl-D-amino-acid deacylase family. Requires Zn(2+) as cofactor.

Its subcellular location is the cytoplasm. The catalysed reaction is an N-acyl-D-amino acid + H2O = a D-alpha-amino acid + a carboxylate. Its function is as follows. Has a wide specificity; hydrolyzes N-acyl derivative of neutral D-amino acids. The polypeptide is D-aminoacylase (dan) (Alcaligenes xylosoxydans xylosoxydans (Achromobacter xylosoxidans)).